A 227-amino-acid polypeptide reads, in one-letter code: Cytidylate kinase (227 aa).

12–20 (GPSGAGKGT) contacts ATP.

It belongs to the cytidylate kinase family. Type 1 subfamily.

The protein resides in the cytoplasm. The enzyme catalyses CMP + ATP = CDP + ADP. The catalysed reaction is dCMP + ATP = dCDP + ADP. The sequence is that of Cytidylate kinase from Salmonella choleraesuis (strain SC-B67).